The primary structure comprises 969 residues: Aspartic protease 5 (969 aa).

Positions 1 to 22 (MEAGAMGGSSFLSFSSGPSAET) are cleaved as a signal peptide. Low complexity predominate over residues 1–45 (MEAGAMGGSSFLSFSSGPSAETSPSSLSPPTSSSPSPSPQLVSDS). Disordered stretches follow at residues 1-65 (MEAG…SSRT), 79-104 (ENEA…AGHL), 128-149 (SSAT…RSSS), 173-193 (SSSS…SACG), and 311-382 (FLSL…DLPR). The Lumenal portion of the chain corresponds to 23 to 820 (SPSSLSPPTS…PEGLPLSPQQ (798 aa)). The segment covering 311–324 (FLSLSSSPRSLASD) has biased composition (low complexity). Residues 335–355 (QSREQRGEREGERQRPDKGEE) show a composition bias toward basic and acidic residues. Residues 413–758 (YFLDILVGTP…DREQDRVGFA (346 aa)) enclose the Peptidase A1 domain. Asp-431 is a catalytic residue. Positions 608 to 635 (PPESESTPATEALRPVAGESASRRISEK) are disordered. Residue Asp-682 is part of the active site. A disordered region spans residues 768 to 794 (DQRPRGPDSGDGPKGRPTAPFTVPPLR). The span at 769 to 781 (QRPRGPDSGDGPK) shows a compositional bias: basic and acidic residues. Residues 821 to 841 (LWVAAALVVVAILIAVTVILL) form a helical membrane-spanning segment. The Cytoplasmic portion of the chain corresponds to 842-969 (HTIKRPSRSS…TLLDLPLGGE (128 aa)). Positions 922 to 969 (EDDGDFFGDDSVPSAEEQETAPSLSLREESSPFSASQSTLLDLPLGGE) are disordered. The segment covering 952 to 961 (SPFSASQSTL) has biased composition (polar residues).

The protein belongs to the peptidase A1 family. Post-translationally, may be auto-cleaved to produce a 55 kDa form.

The protein resides in the golgi apparatus membrane. In terms of biological role, in tachyzoites, plays an essential role in the export of several dense granule proteins into the host cell by cleaving the localization motif RRLxx (termed Toxoplasma export element (TEXEL)) located downstream of the N-terminal secretory signal sequence. However, can also regulate the export of proteins that lack the TEXEL motif, such as GRA24. Requires Arg at P3 and P2, and Leu at P1 in the substrate TEXEL motif and, specifically, cleaves after Leu. Cleaves GRA16; proteolytic cleavage is essential for the correct trafficking of GRA16 from the parasite into the infected host nucleus. Cleaves GRA19 and GRA20. Cleaves MYR1. Cleaves LCAT, GRA44, GRA46, GRA46, ROP35/WNG1 and ROP34/WNG2. By regulating the export of dense granule proteins into the host cell, regulates multiple processes during tachyzoite infection of host cells, including recruitment of host mitochondria to the parasitophorous vacuole (PV), formation of the nanotubular network (NTN) or intravacuolar network (IVN) which are membranous tubules that bud from the PV membrane into the vacuolar lumen and, up-regulation of host cell genes to facilitate the parasite infection and modulate the host innate immune response. At the bradyzoite stage, also involved in the formation of the cyst wall. This Toxoplasma gondii protein is Aspartic protease 5.